The primary structure comprises 379 residues: Phospholipase A1 (379 aa).

A signal peptide spans 1–20 (MKFITAILVIFCVYLLSTAG). Residues 21–73 (DSKILPLKKLPSKIFGHLKSHVDNTVKKPLKVFGHLKSHVENSVGPLRMNKLT) constitute a propeptide that is removed on maturation. The cysteines at positions 76 and 154 are disulfide-linked. N-linked (GlcNAc...) asparagine glycosylation occurs at Asn126. Ser204 functions as the Nucleophile in the catalytic mechanism. The active-site Charge relay system is Asp232. 2 cysteine pairs are disulfide-bonded: Cys243/Cys248 and Cys285/Cys291. His293 serves as the catalytic Charge relay system.

The protein belongs to the AB hydrolase superfamily. Lipase family. In terms of processing, contains five disulfide bonds. As to expression, expressed by the venom gland.

It localises to the secreted. It carries out the reaction a 1,2-diacyl-sn-glycero-3-phosphocholine + H2O = a 2-acyl-sn-glycero-3-phosphocholine + a fatty acid + H(+). Functionally, catalyzes the hydrolysis of phosphatidylcholine with phospholipase A1 activity. May act as an allergen and induce hemolytic activity. In Dinoponera quadriceps (South American ant), this protein is Phospholipase A1.